A 501-amino-acid polypeptide reads, in one-letter code: Probable cytosol aminopeptidase (501 aa).

Lysine 267 and aspartate 272 together coordinate Mn(2+). Lysine 279 is an active-site residue. Mn(2+)-binding residues include aspartate 290, aspartate 349, and glutamate 351. Arginine 353 is a catalytic residue.

This sequence belongs to the peptidase M17 family. Mn(2+) is required as a cofactor.

Its subcellular location is the cytoplasm. It catalyses the reaction Release of an N-terminal amino acid, Xaa-|-Yaa-, in which Xaa is preferably Leu, but may be other amino acids including Pro although not Arg or Lys, and Yaa may be Pro. Amino acid amides and methyl esters are also readily hydrolyzed, but rates on arylamides are exceedingly low.. The catalysed reaction is Release of an N-terminal amino acid, preferentially leucine, but not glutamic or aspartic acids.. Its function is as follows. Presumably involved in the processing and regular turnover of intracellular proteins. Catalyzes the removal of unsubstituted N-terminal amino acids from various peptides. The protein is Probable cytosol aminopeptidase of Desulfovibrio desulfuricans (strain ATCC 27774 / DSM 6949 / MB).